Reading from the N-terminus, the 171-residue chain is Skp-like protein (171 aa).

A signal peptide spans 1-21 (MKKLLFSTFLLVLGSTSAAHA).

This sequence belongs to the Skp family.

This Chlamydia pneumoniae (Chlamydophila pneumoniae) protein is Skp-like protein.